We begin with the raw amino-acid sequence, 320 residues long: Tyrosine recombinase XerC (320 aa).

The region spanning 14-104 (ADVREAVASW…SLRSFARHLE (91 aa)) is the Core-binding (CB) domain. Residues 125–311 (RLPRPLPVAA…DSARLMSAFE (187 aa)) enclose the Tyr recombinase domain. Residues R170, K195, H263, R266, and H289 contribute to the active site. Y298 functions as the O-(3'-phospho-DNA)-tyrosine intermediate in the catalytic mechanism.

The protein belongs to the 'phage' integrase family. XerC subfamily. As to quaternary structure, forms a cyclic heterotetrameric complex composed of two molecules of XerC and two molecules of XerD.

It localises to the cytoplasm. Its function is as follows. Site-specific tyrosine recombinase, which acts by catalyzing the cutting and rejoining of the recombining DNA molecules. The XerC-XerD complex is essential to convert dimers of the bacterial chromosome into monomers to permit their segregation at cell division. It also contributes to the segregational stability of plasmids. The chain is Tyrosine recombinase XerC from Methylobacterium sp. (strain 4-46).